The primary structure comprises 414 residues: Gamma-glutamyl phosphate reductase (414 aa).

The protein belongs to the gamma-glutamyl phosphate reductase family.

The protein localises to the cytoplasm. The enzyme catalyses L-glutamate 5-semialdehyde + phosphate + NADP(+) = L-glutamyl 5-phosphate + NADPH + H(+). Its pathway is amino-acid biosynthesis; L-proline biosynthesis; L-glutamate 5-semialdehyde from L-glutamate: step 2/2. Catalyzes the NADPH-dependent reduction of L-glutamate 5-phosphate into L-glutamate 5-semialdehyde and phosphate. The product spontaneously undergoes cyclization to form 1-pyrroline-5-carboxylate. In Clostridium botulinum (strain Alaska E43 / Type E3), this protein is Gamma-glutamyl phosphate reductase.